A 591-amino-acid polypeptide reads, in one-letter code: L-fucose isomerase (591 aa).

Active-site proton acceptor residues include glutamate 337 and aspartate 361. Mn(2+)-binding residues include glutamate 337, aspartate 361, and histidine 528.

This sequence belongs to the L-fucose isomerase family. Homohexamer. Mn(2+) is required as a cofactor.

It localises to the cytoplasm. The catalysed reaction is L-fucose = L-fuculose. It participates in carbohydrate degradation; L-fucose degradation; L-lactaldehyde and glycerone phosphate from L-fucose: step 1/3. Converts the aldose L-fucose into the corresponding ketose L-fuculose. The protein is L-fucose isomerase of Salmonella arizonae (strain ATCC BAA-731 / CDC346-86 / RSK2980).